Here is a 343-residue protein sequence, read N- to C-terminus: Phosphate acyltransferase (343 aa).

The protein belongs to the PlsX family. Homodimer. Probably interacts with PlsY.

It is found in the cytoplasm. It carries out the reaction a fatty acyl-[ACP] + phosphate = an acyl phosphate + holo-[ACP]. It participates in lipid metabolism; phospholipid metabolism. Catalyzes the reversible formation of acyl-phosphate (acyl-PO(4)) from acyl-[acyl-carrier-protein] (acyl-ACP). This enzyme utilizes acyl-ACP as fatty acyl donor, but not acyl-CoA. This chain is Phosphate acyltransferase, found in Halorhodospira halophila (strain DSM 244 / SL1) (Ectothiorhodospira halophila (strain DSM 244 / SL1)).